Reading from the N-terminus, the 460-residue chain is Phosphoglucomutase (460 aa).

The Phosphoserine intermediate role is filled by Ser103. A Mg(2+)-binding site is contributed by Ser103. Substrate contacts are provided by residues 103–104 (SH) and Lys113. Mg(2+) contacts are provided by Asp239, Asp241, and Asp243. Substrate-binding positions include 243–244 (DR), Thr303, and 322–324 (EMS).

Belongs to the phosphohexose mutase family. Mg(2+) is required as a cofactor.

The protein localises to the cytoplasm. The enzyme catalyses alpha-D-glucose 1-phosphate = alpha-D-glucose 6-phosphate. Its function is as follows. This enzyme participates in both the breakdown and synthesis of glucose. This chain is Phosphoglucomutase (pgm), found in Neisseria meningitidis serogroup B (strain ATCC BAA-335 / MC58).